The sequence spans 158 residues: Phosphopantetheine adenylyltransferase (158 aa).

Serine 8 lines the substrate pocket. ATP is bound by residues 8-9 and histidine 16; that span reads SF. Residues lysine 40, threonine 72, and arginine 86 each contribute to the substrate site. Residues 87–89, glutamate 97, and 122–128 each bind ATP; these read GLR and HSFLSSS.

The protein belongs to the bacterial CoaD family. In terms of assembly, homohexamer. The cofactor is Mg(2+).

The protein resides in the cytoplasm. It carries out the reaction (R)-4'-phosphopantetheine + ATP + H(+) = 3'-dephospho-CoA + diphosphate. The protein operates within cofactor biosynthesis; coenzyme A biosynthesis; CoA from (R)-pantothenate: step 4/5. Reversibly transfers an adenylyl group from ATP to 4'-phosphopantetheine, yielding dephospho-CoA (dPCoA) and pyrophosphate. The chain is Phosphopantetheine adenylyltransferase from Prochlorococcus marinus (strain NATL2A).